We begin with the raw amino-acid sequence, 366 residues long: Pyruvate dehydrogenase E1 component subunit beta, mitochondrial (366 aa).

The transit peptide at 1 to 33 (MFSRLPTSLARNVARRAPTSFVRPSAAAAALRF) directs the protein to the mitochondrion. Glu-95 serves as a coordination point for thiamine diphosphate. Positions 196, 197, 199, and 201 each coordinate K(+).

As to quaternary structure, pyruvate dehydrogenase (E1) is a tetramer of 2 alpha and 2 beta subunits. Eukaryotic pyruvate dehydrogenase (PDH) complexes are organized as a core consisting of the oligomeric dihydrolipoamide acetyl-transferase (E2), around which are arranged multiple copies of pyruvate dehydrogenase (E1), dihydrolipoamide dehydrogenase (E3) and protein X (E3BP) bound by non-covalent bonds. It depends on thiamine diphosphate as a cofactor.

The protein resides in the mitochondrion matrix. It catalyses the reaction N(6)-[(R)-lipoyl]-L-lysyl-[protein] + pyruvate + H(+) = N(6)-[(R)-S(8)-acetyldihydrolipoyl]-L-lysyl-[protein] + CO2. Functionally, the pyruvate dehydrogenase complex catalyzes the overall conversion of pyruvate to acetyl-CoA and CO(2). The protein is Pyruvate dehydrogenase E1 component subunit beta, mitochondrial (PDB1) of Saccharomyces cerevisiae (strain ATCC 204508 / S288c) (Baker's yeast).